A 330-amino-acid polypeptide reads, in one-letter code: Malate dehydrogenase (330 aa).

11 to 17 provides a ligand contact to NAD(+); that stretch reads GGAGQIA. 2 residues coordinate substrate: Arg92 and Arg98. NAD(+)-binding positions include Asn105, Gln112, and 129 to 131; that span reads VGN. Positions 131 and 162 each coordinate substrate. Catalysis depends on His187, which acts as the Proton acceptor.

This sequence belongs to the LDH/MDH superfamily. MDH type 2 family.

It catalyses the reaction (S)-malate + NAD(+) = oxaloacetate + NADH + H(+). Functionally, catalyzes the reversible oxidation of malate to oxaloacetate. This chain is Malate dehydrogenase, found in Protochlamydia amoebophila (strain UWE25).